We begin with the raw amino-acid sequence, 916 residues long: Translation initiation factor IF-2 (916 aa).

Residues 55 to 324 (EPKAVTPTSK…NHNANLKPVT (270 aa)) form a disordered region. Low complexity predominate over residues 77–88 (AAEPKAAATKPA). Composition is skewed to basic and acidic residues over residues 98-121 (FKAE…ERRN), 129-161 (RQKD…DNRN), and 198-212 (RQSE…EAKR). A compositionally biased stretch (low complexity) spans 227-250 (KEQPTVEAAATAAPQAQPQTVEQV). Residues 264–281 (ARPDKSRDFSHENEDGPK) show a composition bias toward basic and acidic residues. Low complexity predominate over residues 291-304 (KQNQVRNQKNSNWN). A compositionally biased stretch (basic residues) spans 305–314 (KKNKKSKNNR). The tr-type G domain maps to 418–585 (ERAPVVTIMG…TVLLVAEIQE (168 aa)). Residues 427 to 434 (GHVDHGKT) are G1. 427–434 (GHVDHGKT) serves as a coordination point for GTP. The G2 stretch occupies residues 452–456 (GITQH). The segment at 473–476 (DTPG) is G3. Residues 473 to 477 (DTPGH) and 527 to 530 (NKID) each bind GTP. The G4 stretch occupies residues 527 to 530 (NKID). Positions 563 to 565 (SAK) are G5.

This sequence belongs to the TRAFAC class translation factor GTPase superfamily. Classic translation factor GTPase family. IF-2 subfamily.

It localises to the cytoplasm. One of the essential components for the initiation of protein synthesis. Protects formylmethionyl-tRNA from spontaneous hydrolysis and promotes its binding to the 30S ribosomal subunits. Also involved in the hydrolysis of GTP during the formation of the 70S ribosomal complex. The polypeptide is Translation initiation factor IF-2 (Streptococcus mutans serotype c (strain ATCC 700610 / UA159)).